The sequence spans 492 residues: MDPYKHRPSSSFNGPLWSTNSGAPVWNNNNSLTVGSRGPILLEDYHLVEKLANFDRERIPERVVHARGASAKGFFEVTHDITHLTCADFLRAPGVQTPVIVRFSTVIHERGSPETLRDPRGFAIKFYTREGNWDLVGNNFPVFFIRDGMKFPDMVHSLKPNPKSHVQENWRILDFFSHHPESLHMFTFLFDDIGIPADYRHMDGSGVNTYTLVNRAGKSHYVKFHWKPTCGVKSLLDDEAVTVGGTNHSHATQDLYDSIAAGNFPEWKLFIQTIDPDHEDRFDFDPLDVTKTWPEDIVPLQPVGRMVLNRNIDNFFSENEQLAFCPGIIVPGIYYSDDKLLQTRIFSYSDTQRHRLGPNYLLLPPNAPKCAHHNNHYDGFMNFMHRDEEVDYFPSRYDPAKHAPRYPIPSATLTGRREKVVIAKENNFKQPGERYRSWDPARQDRFIKRWIDALSDPRLTHEIRSIWLSYWSQADRSLGQKLASRLSAKPSM.

Heme is bound at residue R62. H65 is a catalytic residue. Position 102 (R102) interacts with heme. Residue N138 is part of the active site. Position 151 (F151) interacts with heme. At Y210 the chain carries Phosphotyrosine; by STRK1. The 3-(S-cysteinyl)-tyrosine (Cys-Tyr) cross-link spans 325-348; it reads CPGIIVPGIYYSDDKLLQTRIFSY. Heme is bound by residues R344, Y348, and R355. The Peroxisome targeting signal signature appears at 484–492; that stretch reads SRLSAKPSM.

Belongs to the catalase family. As to quaternary structure, homotetramer. Interacts with GLO1 and GLO4; these interactions are disturbed by alpha-hydroxy-2-pyridinemethanesulfonic acid (HPMS) and salicylic acid (SA). Interacts with STRK1 at the plasma membrane. It depends on heme as a cofactor. Post-translationally, activated by STRK1-mediated phosphorylation at Tyr-210 upon salt and oxidative stress. In terms of tissue distribution, highly expressed in mature leaves. Mainly expressed in leaf blades, stems, panicles, leaf sheaths, and culms, but barely in roots.

It localises to the peroxisome. The protein localises to the glyoxysome. Its subcellular location is the cell membrane. It catalyses the reaction 2 H2O2 = O2 + 2 H2O. Strongly inhibited by beta-mercaptoethanol, sodium azide and potassium cyanide. Slightly repressed by 3-amino-1,2,4-triazole (3-AT). Activity is repressed proportionally to increased concentration of NaCl, KCl, LiCl and MgCl(2). Its function is as follows. Occurs in almost all aerobically respiring organisms and serves to protect cells from the toxic effects of hydrogen peroxide. Responsible for the redox homeostasis in leaves. Prevents nitric oxide (NO) accumulation and subsequent NO-mediated leaf cell death as well as the S-nitrosylation of specific proteins (e.g. glyceraldehyde 3-phosphate dehydrogenase and thioredoxin) by degrading H(2)O(2). Involved in photorespiration. Promotes drought stress tolerance and recovery. Involved in NO-mediated enhanced tolerance to zinc oxide nanoparticles (ZnO NPs)-induced phytotoxicity. Participates in melatonin-mediated detoxification. This is Catalase isozyme C from Oryza sativa subsp. japonica (Rice).